Consider the following 326-residue polypeptide: dTDP-4-dehydro-6-deoxy-D-allose reductase (326 aa).

NADP(+) contacts are provided by residues 15–21 (GALGFIG) and 129–132 (MSSS). Tyr160 (proton donor/acceptor) is an active-site residue. NADP(+) is bound by residues Lys164 and 187–190 (PGNV).

This sequence belongs to the NAD(P)-dependent epimerase/dehydratase family.

It carries out the reaction dTDP-6-deoxy-alpha-D-allose + NAD(+) = dTDP-4-dehydro-6-deoxy-alpha-D-allose + NADH + H(+). The catalysed reaction is dTDP-6-deoxy-alpha-D-allose + NADP(+) = dTDP-4-dehydro-6-deoxy-alpha-D-allose + NADPH + H(+). Its function is as follows. Catalyzes the stereospecific reduction of the C-4 keto group of dTDP-4-dehydro-6-deoxy-D-allose, leading to dTDP-6-deoxy-D-allose, an intermediate in the biosynthesis of the mycinose moiety of the chalcomycin antibiotic. This is dTDP-4-dehydro-6-deoxy-D-allose reductase (chmD) from Streptomyces bikiniensis.